The following is a 267-amino-acid chain: Alpha-tubulin N-acetyltransferase (267 aa).

The N-acetyltransferase domain occupies 1–197; that stretch reads MDFRAGLENV…NNFVVYSEFF (197 aa). Residues 131 to 144 and 167 to 176 contribute to the acetyl-CoA site; these read FYIH…GYGK and SMKMIQFLHK.

The protein belongs to the acetyltransferase ATAT1 family.

It carries out the reaction L-lysyl-[alpha-tubulin] + acetyl-CoA = N(6)-acetyl-L-lysyl-[alpha-tubulin] + CoA + H(+). Functionally, specifically acetylates 'Lys-40' in alpha-tubulin on the lumenal side of microtubules. Promotes microtubule destabilization and accelerates microtubule dynamics; this activity may be independent of acetylation activity. Acetylates alpha-tubulin with a slow enzymatic rate, due to a catalytic site that is not optimized for acetyl transfer. Enters the microtubule through each end and diffuses quickly throughout the lumen of microtubules. Acetylates only long/old microtubules because of its slow acetylation rate since it does not have time to act on dynamically unstable microtubules before the enzyme is released. This is Alpha-tubulin N-acetyltransferase from Schistosoma japonicum (Blood fluke).